We begin with the raw amino-acid sequence, 937 residues long: MLKLLLGDPNARKLKRYQPIVSDINLLEEDIFPLSDDALRDKTAAFQEQLASAGSLENQRPILDEILPEAFAVVREAGKRVLGMRHFDVQLIGGMVLHEGQIAEMKTGEGKTLVATLPSYLNALTGRGVHVVTVNDYLARRDAEWMGQVHRFLGLSVGLIQQDMRPEERRRNYNCDITYATNSELGFDYLRDNMAADISEVVQREFQYCVIDEVDSILIDEARTPLIISGQVQRPQEKYQQAAQVAQALTRAAEMGKDGIDPEGDYEVDEKQRSCTLTDEGFAKAEQMLGVQDLFDPQDPWAHYITNALKAKDLFVKDVNYIVRDGEAVIVDEFTGRVMPGRRWSDGQHQAIEAKEALPIQAETQTLASITYQNFFLLYPRLAGMTGTAKTEEVEFEKTYKLETTIVPTNRVRARQDWPDQVYKTETAKWRAVANETVDIHKNGRPVLVGTTSVEKSELLSALLAEQEIPHNLLNAKPENVERESEIVAQAGRAGAVTIATNMAGRGTDIILGGNSDYMARLKLREVLLGRLVKPEENHKPPVPLQRNAAAGFSEAPTASATPSRDSLYPCVLTDDTDQTLAQLARDLVKAWGDRALTLIELEERIATAAEKAPTDDPNIQALRAATARVKGEFDAVVKQEEQRVREAGGLHVIGTERHESRRVDNQLRGRAGRQGDPGSTRFFLSLGDNLLRIFGGDRVAGLMNAFRVEEDMPIESGMLTRSLEGAQKKVETYYYDIRKQVFEYDEVMNNQRRAVYSERRRVLDGRALKKQVIGYGERTMNEIVEAYVNPDLPPEEWDTAQLVAKVKEFVYLLEDLTPEQVQGLGMDELKAFLQEQLRNAYDIKEGQVEQQRPGLMREAERFFILQQIDTLWREHLQAMDALRESVGLRGYGQKDPLIEYKNEGYDMFLEMMTNMRRNVIYSMFMFQPAAPQQSQV.

ATP contacts are provided by residues Gln-90, 108 to 112, and Asp-509; that span reads GEGKT.

It belongs to the SecA family. Monomer and homodimer. Part of the essential Sec protein translocation apparatus which comprises SecA, SecYEG and auxiliary proteins SecDF. Other proteins may also be involved.

The protein resides in the cell inner membrane. It is found in the cellular thylakoid membrane. Its subcellular location is the cytoplasm. It carries out the reaction ATP + H2O + cellular proteinSide 1 = ADP + phosphate + cellular proteinSide 2.. Its function is as follows. Part of the Sec protein translocase complex. Interacts with the SecYEG preprotein conducting channel. Has a central role in coupling the hydrolysis of ATP to the transfer of proteins into and across the cell membrane, serving as an ATP-driven molecular motor driving the stepwise translocation of polypeptide chains across the membrane. In terms of biological role, probably participates in protein translocation into and across both the cytoplasmic and thylakoid membranes in cyanobacterial cells. The sequence is that of Protein translocase subunit SecA from Parasynechococcus marenigrum (strain WH8102).